Here is a 341-residue protein sequence, read N- to C-terminus: tRNA N6-adenosine threonylcarbamoyltransferase (341 aa).

Positions 111 and 115 each coordinate Fe cation. Residues 134–138, D167, G180, and N276 each bind substrate; that span reads LVSGG. A Fe cation-binding site is contributed by D304.

The protein belongs to the KAE1 / TsaD family. It depends on Fe(2+) as a cofactor.

The protein resides in the cytoplasm. It carries out the reaction L-threonylcarbamoyladenylate + adenosine(37) in tRNA = N(6)-L-threonylcarbamoyladenosine(37) in tRNA + AMP + H(+). Functionally, required for the formation of a threonylcarbamoyl group on adenosine at position 37 (t(6)A37) in tRNAs that read codons beginning with adenine. Is involved in the transfer of the threonylcarbamoyl moiety of threonylcarbamoyl-AMP (TC-AMP) to the N6 group of A37, together with TsaE and TsaB. TsaD likely plays a direct catalytic role in this reaction. This is tRNA N6-adenosine threonylcarbamoyltransferase from Pseudomonas aeruginosa (strain ATCC 15692 / DSM 22644 / CIP 104116 / JCM 14847 / LMG 12228 / 1C / PRS 101 / PAO1).